A 1111-amino-acid chain; its full sequence is Receptor-type guanylate cyclase gcy-14 (1111 aa).

An N-terminal signal peptide occupies residues 1 to 14 (MCLFLLLFPYLASG). Residues 15–473 (QFLQTVKVGL…ECPPDFVKEY (459 aa)) are Extracellular-facing. Asparagine 65, asparagine 130, asparagine 318, asparagine 340, asparagine 365, and asparagine 379 each carry an N-linked (GlcNAc...) asparagine glycan. The helical transmembrane segment at 474 to 494 (LVYTIIAAVIVVLALLAGCAG) threads the bilayer. A Protein kinase domain is found at 482 to 817 (VIVVLALLAG…KSNLMDHVFN (336 aa)). ATP-binding positions include 488-496 (LLAGCAGLL) and lysine 545. The Cytoplasmic portion of the chain corresponds to 495–1111 (LLYTMQMKRK…DFNNGNECVS (617 aa)). One can recognise a Guanylate cyclase domain in the interval 875–1005 (TIFFSDVVQF…DAVNTASRME (131 aa)). The segment at 1061 to 1082 (SAQAPREKTPEPPRRQSVRSIS) is disordered. Residues 1065–1074 (PREKTPEPPR) show a composition bias toward basic and acidic residues.

It belongs to the adenylyl cyclase class-4/guanylyl cyclase family. Homodimer. Expressed asymmetrically in ASEL sensory neuron.

Its subcellular location is the cell membrane. It localises to the cell projection. The protein resides in the cilium. It catalyses the reaction GTP = 3',5'-cyclic GMP + diphosphate. Functionally, guanylate cyclase involved in the production of the second messenger cGMP. Regulates chemotaxis responses toward Na(1+) and Li(1+) salt ions and alkaline pH in ASE left (ASEL) sensory neuron. Directly senses environmental alkalinity in ASEL neuron which probably leads to the activation of cGMP-gated cation channel tax2/tax4. The sequence is that of Receptor-type guanylate cyclase gcy-14 from Caenorhabditis elegans.